Consider the following 338-residue polypeptide: Auxin-responsive protein IAA9 (338 aa).

Positions 1-25 are disordered; that stretch reads MSPEEELQSNVSVASSSPTSNCISR. The segment covering 9–21 has biased composition (low complexity); it reads SNVSVASSSPTSN. The EAR-like (transcriptional repression) motif lies at 68–72; that stretch reads LTLGL. Residues 150–186 are disordered; sequence ATQSVTKKDVPQNIPKGQSSTTNNSSSPPAAKAQIVG. Residues 168–180 are compositionally biased toward low complexity; sequence SSTTNNSSSPPAA. The PB1 domain maps to 216–318; sequence ALFVKVSMDG…VCKKLKIMKG (103 aa).

It belongs to the Aux/IAA family. Homodimers and heterodimers. Interacts with TPL. In terms of processing, phosphorylated by phytochrome A in vitro. Highly expressed in the whole plant.

The protein resides in the nucleus. Its function is as follows. Aux/IAA proteins are short-lived transcriptional factors that function as repressors of early auxin response genes at low auxin concentrations. Repression is thought to result from the interaction with auxin response factors (ARFs), proteins that bind to the auxin-responsive promoter element (AuxRE). Formation of heterodimers with ARF proteins may alter their ability to modulate early auxin response genes expression. The chain is Auxin-responsive protein IAA9 (IAA9) from Arabidopsis thaliana (Mouse-ear cress).